Reading from the N-terminus, the 503-residue chain is Betaine aldehyde dehydrogenase 2 (503 aa).

Residue 161–170 (WNYPLLMATW) participates in betaine aldehyde binding. 238–243 (GSYETG) is an NAD(+) binding site. Residues Glu260, 292-295 (QICS), and Cys453 contribute to the betaine aldehyde site. Catalysis depends on residues Glu260 and Cys294. 4-aminobutanal is bound by residues 260–261 (EL) and Cys294. A 4-aminobutanal-binding site is contributed by Trp459. Positions 501–503 (SKL) match the Microbody targeting signal motif.

This sequence belongs to the aldehyde dehydrogenase family. In terms of assembly, homodimer.

The protein resides in the peroxisome. It localises to the cytoplasm. The enzyme catalyses betaine aldehyde + NAD(+) + H2O = glycine betaine + NADH + 2 H(+). It participates in amine and polyamine biosynthesis; betaine biosynthesis via choline pathway; betaine from betaine aldehyde: step 1/1. Functionally, dehydrogenase that can use N-acetyl-c-aminobutyraldehyde (NAGABald), gamma-guanidinobutyraldehyde (GGBald), betaine aldehyde (Bet-ald), gamma-aminobutyraldehyde (GAB-ald), acetaldehyde, 4-aminobutylaldehyde (AB-ald), 3-aminopropionaldehyde (AP-ald), 4-N-trimethylaminobutyraldehyde (TMAB-ald) and 3-N-trimethylaminopropionaldehyde (TMAP-ald) as substrates. Catalyzes the oxidation of GAB-ald more efficiently than Bet-ald. Mediates the conversion of GAB-ald into gamma-aminobutyric acid (GABA), and prevents the formation of 2-acetyl-1-pyrroline (2AP) which gives fragrant rice its aromatic properties. The sequence is that of Betaine aldehyde dehydrogenase 2 (BADH2) from Oryza sativa subsp. indica (Rice).